The sequence spans 952 residues: Lysosomal alpha-glucosidase (952 aa).

Positions 1–27 (MGVRHPPCSHRLLAVCALVSLATAALL) are cleaved as a signal peptide. Residues 28–69 (GHILLHDFLLVPRELSGSSPVLEETHPAHQQGASRPGPRDAQ) constitute a propeptide that is removed on maturation. Residues 47–82 (PVLEETHPAHQQGASRPGPRDAQAHPGRPRAVPTQC) form a disordered region. The P-type domain occupies 80–131 (TQCDVPPNSRFDCAPDKAITQEQCEARGCCYIPAKQGLQGAQMGQPWCFFPP). 3 cysteine pairs are disulfide-bonded: cysteine 82-cysteine 109, cysteine 92-cysteine 108, and cysteine 103-cysteine 127. 3 N-linked (GlcNAc...) asparagine glycosylation sites follow: asparagine 140, asparagine 233, and asparagine 390. Aspartate 404 is a substrate binding site. N-linked (GlcNAc...) asparagine glycosylation occurs at asparagine 470. The Nucleophile role is filled by aspartate 518. Glutamate 521 is an active-site residue. A disulfide bridge links cysteine 533 with cysteine 558. Substrate contacts are provided by arginine 600 and aspartate 616. The cysteines at positions 647 and 658 are disulfide-linked. A glycan (N-linked (GlcNAc...) asparagine) is linked at asparagine 652. Position 674 (histidine 674) interacts with substrate. Asparagine 882 and asparagine 925 each carry an N-linked (GlcNAc...) asparagine glycan.

This sequence belongs to the glycosyl hydrolase 31 family. The different forms of acid glucosidase are obtained by proteolytic processing. In terms of processing, phosphorylation of mannose residues ensures efficient transport of the enzyme to the lysosomes via the mannose 6-phosphate receptor.

The protein localises to the lysosome. It is found in the lysosome membrane. It carries out the reaction Hydrolysis of terminal, non-reducing (1-&gt;4)-linked alpha-D-glucose residues with release of alpha-D-glucose.. Its function is as follows. Essential for the degradation of glycogen in lysosomes. Has highest activity on alpha-1,4-linked glycosidic linkages, but can also hydrolyze alpha-1,6-linked glucans. The sequence is that of Lysosomal alpha-glucosidase (GAA) from Homo sapiens (Human).